We begin with the raw amino-acid sequence, 139 residues long: MGHRGMGCAHFATMAMPLWALTFYLLVVLPVPSQTASVEVGKEERRLQDLDPKMGSEAGNTDGLSLARFGSRRHQRSTGFGHRVPIISRPVIPIELDLLMDNEDDRTMSKRFDDYGHMRFGKRGGDDQFDDYGHMRFGR.

Residues 1-35 form the signal peptide; the sequence is MGHRGMGCAHFATMAMPLWALTFYLLVVLPVPSQT. Positions 36-71 are excised as a propeptide; sequence ASVEVGKEERRLQDLDPKMGSEAGNTDGLSLARFGS. The residue at position 80 (Phe-80) is a Phenylalanine amide. A propeptide spanning residues 81 to 109 is cleaved from the precursor; sequence GHRVPIISRPVIPIELDLLMDNEDDRTMS. Tyr-115 bears the Sulfotyrosine mark. Phe-120 bears the Phenylalanine amide mark. Tyr-132 carries the sulfotyrosine modification. The residue at position 137 (Phe-137) is a Phenylalanine amide.

The protein belongs to the gastrin/cholecystokinin family.

It localises to the secreted. Drosulfakinin-0 (DSK 0) plays diverse biological roles including regulating gut muscle contraction in adults but not in larvae. The protein is Drosulfakinins of Drosophila pseudoobscura pseudoobscura (Fruit fly).